A 382-amino-acid chain; its full sequence is Dual-specificity RNA methyltransferase RlmN (382 aa).

E96 (proton acceptor) is an active-site residue. Residues 102-342 (QGKRGTLCVS…VRTTRGEDID (241 aa)) enclose the Radical SAM core domain. C109 and C345 form a disulfide bridge. The [4Fe-4S] cluster site is built by C116, C120, and C123. S-adenosyl-L-methionine is bound by residues 170–171 (GE), S202, 224–226 (SLH), and N302. The S-methylcysteine intermediate role is filled by C345.

It belongs to the radical SAM superfamily. RlmN family. [4Fe-4S] cluster serves as cofactor.

Its subcellular location is the cytoplasm. It carries out the reaction adenosine(2503) in 23S rRNA + 2 reduced [2Fe-2S]-[ferredoxin] + 2 S-adenosyl-L-methionine = 2-methyladenosine(2503) in 23S rRNA + 5'-deoxyadenosine + L-methionine + 2 oxidized [2Fe-2S]-[ferredoxin] + S-adenosyl-L-homocysteine. It catalyses the reaction adenosine(37) in tRNA + 2 reduced [2Fe-2S]-[ferredoxin] + 2 S-adenosyl-L-methionine = 2-methyladenosine(37) in tRNA + 5'-deoxyadenosine + L-methionine + 2 oxidized [2Fe-2S]-[ferredoxin] + S-adenosyl-L-homocysteine. In terms of biological role, specifically methylates position 2 of adenine 2503 in 23S rRNA and position 2 of adenine 37 in tRNAs. m2A2503 modification seems to play a crucial role in the proofreading step occurring at the peptidyl transferase center and thus would serve to optimize ribosomal fidelity. This is Dual-specificity RNA methyltransferase RlmN from Pseudomonas fluorescens (strain SBW25).